The primary structure comprises 264 residues: MNQYHDLLERILSDGAEKHDRTGTGTLSIFGHQMRFNLASGFPMLTTKKLPLKSIVHELLWFLKGETNVRYLREHGVSIWDEWADANGDLGPVYGSQWRSWPAPDGRSIDQIANVVDMIGRSPDSRRLIVSAWNPADVDKMALPPCHCLFQFYVADGKLSCQLYQRSADVFLGVPFNIASYALLTMMVAQVTGLKPGDFVHSLGDAHLYLNHLDQARLQLTRPTRSLPTMTINPEVKSIFAFRYEDFKLENYDPHPHIKAEVAV.

Residues Arg-21 and 126–127 contribute to the dUMP site; that span reads RR. The active-site Nucleophile is Cys-146. DUMP contacts are provided by residues 166–169, Asn-177, and 207–209; these read RSAD and HLY. Residue Asp-169 participates in (6R)-5,10-methylene-5,6,7,8-tetrahydrofolate binding. Position 263 (Ala-263) interacts with (6R)-5,10-methylene-5,6,7,8-tetrahydrofolate.

This sequence belongs to the thymidylate synthase family. Bacterial-type ThyA subfamily. In terms of assembly, homodimer.

Its subcellular location is the cytoplasm. It carries out the reaction dUMP + (6R)-5,10-methylene-5,6,7,8-tetrahydrofolate = 7,8-dihydrofolate + dTMP. It participates in pyrimidine metabolism; dTTP biosynthesis. Its function is as follows. Catalyzes the reductive methylation of 2'-deoxyuridine-5'-monophosphate (dUMP) to 2'-deoxythymidine-5'-monophosphate (dTMP) while utilizing 5,10-methylenetetrahydrofolate (mTHF) as the methyl donor and reductant in the reaction, yielding dihydrofolate (DHF) as a by-product. This enzymatic reaction provides an intracellular de novo source of dTMP, an essential precursor for DNA biosynthesis. In Nitrobacter hamburgensis (strain DSM 10229 / NCIMB 13809 / X14), this protein is Thymidylate synthase.